Here is a 287-residue protein sequence, read N- to C-terminus: NAD-dependent protein deacylase sir-2.2 (287 aa).

The Deacetylase sirtuin-type domain maps to 10-287; it reads AELCENSLKK…YKISDVLKEM (278 aa). NAD(+) is bound by residues 35–55 and 116–119; these read GAGI…VGLY and QNVD. The active-site Proton acceptor is His134. The Zn(2+) site is built by Cys142, Cys145, Cys196, and Cys199. NAD(+) contacts are provided by residues 236–238, 262–264, and Ile280; these read GTS and NIG.

This sequence belongs to the sirtuin family. Class II subfamily. In terms of assembly, interacts with pyc-1, pcca-1 and mccc-1. Zn(2+) serves as cofactor. Ubiquitously expressed with high expression in the pharynx, body wall muscles and gonad.

The protein localises to the mitochondrion matrix. It localises to the mitochondrion. The enzyme catalyses N(6)-acetyl-L-lysyl-[protein] + NAD(+) + H2O = 2''-O-acetyl-ADP-D-ribose + nicotinamide + L-lysyl-[protein]. In terms of biological role, NAD-dependent protein deacylase. Catalyzes the NAD-dependent hydrolysis of acyl groups from lysine residues. Plays a role in oxidative stress resistance. This is NAD-dependent protein deacylase sir-2.2 (sir-2.2) from Caenorhabditis elegans.